Reading from the N-terminus, the 430-residue chain is Dihydrofolate synthase/folylpolyglutamate synthase (430 aa).

An ATP-binding site is contributed by glycine 51–serine 54. Serine 75 is a Mg(2+) binding site. Threonine 114–glycine 117 serves as a coordination point for 7,8-dihydropteroate. Mg(2+) is bound at residue glutamate 145. A 7,8-dihydropteroate-binding site is contributed by phenylalanine 152–serine 154. Histidine 172 is a Mg(2+) binding site. The ATP site is built by glutamine 263, arginine 302, and aspartate 315.

It belongs to the folylpolyglutamate synthase family. As to quaternary structure, monomer. Requires Mg(2+) as cofactor.

It catalyses the reaction 7,8-dihydropteroate + L-glutamate + ATP = 7,8-dihydrofolate + ADP + phosphate + H(+). The enzyme catalyses (6S)-5,6,7,8-tetrahydrofolyl-(gamma-L-Glu)(n) + L-glutamate + ATP = (6S)-5,6,7,8-tetrahydrofolyl-(gamma-L-Glu)(n+1) + ADP + phosphate + H(+). It functions in the pathway cofactor biosynthesis; tetrahydrofolate biosynthesis; 7,8-dihydrofolate from 2-amino-4-hydroxy-6-hydroxymethyl-7,8-dihydropteridine diphosphate and 4-aminobenzoate: step 2/2. It participates in cofactor biosynthesis; tetrahydrofolylpolyglutamate biosynthesis. In terms of biological role, functions in two distinct reactions of the de novo folate biosynthetic pathway. Catalyzes the addition of a glutamate residue to dihydropteroate (7,8-dihydropteroate or H2Pte) to form dihydrofolate (7,8-dihydrofolate monoglutamate or H2Pte-Glu). Also catalyzes successive additions of L-glutamate to tetrahydrofolate, leading to folylpolyglutamate derivatives. This is Dihydrofolate synthase/folylpolyglutamate synthase (folC) from Bacillus subtilis (strain 168).